Here is a 410-residue protein sequence, read N- to C-terminus: Lysosome-associated membrane glycoprotein 2 (410 aa).

Positions 1–28 are cleaved as a signal peptide; sequence MMCFRLSPVSGSGLVLSCLLLGAVQSYA. The tract at residues 29–192 is first lumenal domain; it reads FELNLPDSKA…SKEEFVCEED (164 aa). Residues 29-375 lie on the Lumenal side of the membrane; the sequence is FELNLPDSKA…QDCSADEDNF (347 aa). An intrachain disulfide couples C40 to C79. N48, N58, N71, N75, N99, N119, N123, N179, N222, N229, N242, N260, N275, N300, N307, N317, and N356 each carry an N-linked (GlcNAc...) asparagine glycan. Cysteines 153 and 189 form a disulfide. The segment at 193–228 is hinge; the sequence is KSVTTVRPIIHTTVPPPTTTPTPLPPKVGNYSVSNG. The segment at 229–375 is second lumenal domain; that stretch reads NATCLLATMG…QDCSADEDNF (147 aa). Cysteines 232 and 265 form a disulfide. An intrachain disulfide couples C331 to C368. A helical membrane pass occupies residues 376–399; it reads LVPIAVGAALAGVLALVLLAYFIG. Residues 400–410 lie on the Cytoplasmic side of the membrane; the sequence is LKRHHTGYEQF. Residues 401-404 form an important for binding and subsequent lysosomal degradation of target proteins region; the sequence is KRHH.

Belongs to the LAMP family. Monomer. Forms large homooligomers. Interacts (via its cytoplasmic region) with HSPA8; HSPA8 mediates recruitment of proteins with a KFERQ motif to the surface of the lysosome for chaperone-mediated autophagy. Interacts with HSP90 in the lysosome lumen; this enhances LAMP2 stability. Interacts with MLLT11. Interacts with ABCB9. Interacts with FURIN. Interacts with CT55; this interaction may be important for LAMP2 protein stability. Interacts with TMEM175; inhibiting the proton channel activity of TMEM175. Forms a ternary complex with RAB7A and RUFY4 (via RUN domain); the interaction with RAB7A is mediated by RUFY4 (via RUN and coiled coil domains). In terms of processing, extensively N-glycosylated. Contains a minor proportion of O-linked glycans.

It is found in the lysosome membrane. It localises to the endosome membrane. Its subcellular location is the cell membrane. The protein resides in the cytoplasmic vesicle. The protein localises to the autophagosome membrane. In terms of biological role, lysosomal membrane glycoprotein which plays an important role in lysosome biogenesis, lysosomal pH regulation and autophagy. Acts as an important regulator of lysosomal lumen pH regulation by acting as a direct inhibitor of the proton channel TMEM175, facilitating lysosomal acidification for optimal hydrolase activity. Plays an important role in chaperone-mediated autophagy, a process that mediates lysosomal degradation of proteins in response to various stresses and as part of the normal turnover of proteins with a long biological half-live. Functions by binding target proteins, such as GAPDH, NLRP3 and MLLT11, and targeting them for lysosomal degradation. In the chaperone-mediated autophagy, acts downstream of chaperones, such as HSPA8/HSC70, which recognize and bind substrate proteins and mediate their recruitment to lysosomes, where target proteins bind LAMP2. Plays a role in lysosomal protein degradation in response to starvation. Required for the fusion of autophagosomes with lysosomes during autophagy. Cells that lack LAMP2 express normal levels of VAMP8, but fail to accumulate STX17 on autophagosomes, which is the most likely explanation for the lack of fusion between autophagosomes and lysosomes. Required for normal degradation of the contents of autophagosomes. Required for efficient MHC class II-mediated presentation of exogenous antigens via its function in lysosomal protein degradation; antigenic peptides generated by proteases in the endosomal/lysosomal compartment are captured by nascent MHC II subunits. Is not required for efficient MHC class II-mediated presentation of endogenous antigens. The polypeptide is Lysosome-associated membrane glycoprotein 2 (LAMP2) (Cricetulus griseus (Chinese hamster)).